Here is a 348-residue protein sequence, read N- to C-terminus: D-alanine--D-alanine ligase (348 aa).

An ATP-grasp domain is found at 136–341; that stretch reads KYLLQTVGIP…YSDLIEELIQ (206 aa). 169–224 serves as a coordination point for ATP; the sequence is EGSLIYPVFVKPANMGSSVGISKVENREELQEALEEAFRYDARAIVEQGIEAREIE. 3 residues coordinate Mg(2+): aspartate 295, glutamate 308, and asparagine 310.

This sequence belongs to the D-alanine--D-alanine ligase family. The cofactor is Mg(2+). Mn(2+) serves as cofactor.

The protein resides in the cytoplasm. The enzyme catalyses 2 D-alanine + ATP = D-alanyl-D-alanine + ADP + phosphate + H(+). The protein operates within cell wall biogenesis; peptidoglycan biosynthesis. Its function is as follows. Cell wall formation. The protein is D-alanine--D-alanine ligase (ddl) of Enterococcus faecalis (strain ATCC 700802 / V583).